The chain runs to 120 residues: Transcription elongation factor SPT4 (120 aa).

Residues 1–39 (MAASIPSDLRNLRACLLCSLIKSVDAFQTDGCENCDEVL) are interaction with spt-5. The segment at 15–35 (CLLCSLIKSVDAFQTDGCENC) adopts a C4-type zinc-finger fold.

This sequence belongs to the SPT4 family. Interacts with spt-5 to form DSIF. DSIF interacts with RNA polymerase II and with the positive transcription elongation factor b complex (P-TEFb complex), which is composed of cdk-9 and cyclin-T.

The protein resides in the nucleus. Functionally, may function as a component of the DRB sensitivity-inducing factor complex (DSIF complex), which regulates transcription elongation by RNA polymerase II. DSIF may enhance transcriptional pausing at sites proximal to the promoter, which may in turn facilitate the assembly of an elongation competent RNA polymerase II complex. This Caenorhabditis briggsae protein is Transcription elongation factor SPT4 (spt-4).